Here is a 330-residue protein sequence, read N- to C-terminus: MTDLSEKVRAWGRRLVVGAAAAATLPGLIGIAGGAATANAFSRPGLPVEYLQVPSAGMGRDIKVQFQSGGNGSPAVYLLDGLRAQDDYNGWDINTPAFEWYYQSGLSVIMPVGGQSSFYADWYQPACGKAGCSTYKWETFLTSELPQYLASNKGVKSTGSAAVGISMSGSSAMILAVNHPNQFVYAGSLSALLDPSQGMGPSLIGLAMGDAGGYKADAMWGPSSDPAWQRNDPSLQIPALVGNNTRLWVYCGNGTPSELGGANMPAEFLENFVRSSNLKFQDAYNAAGGHNAVFNFNANGTHSWEYWGAQLNAMKPDLQSALGASSGGGG.

A signal peptide spans 1-40 (MTDLSEKVRAWGRRLVVGAAAAATLPGLIGIAGGAATANA). 82 to 83 (LR) contacts substrate. The fibronectin-binding stretch occupies residues 98–108 (FEWYYQSGLSV). An intrachain disulfide couples Cys127 to Cys132. Substrate-binding residues include Ser166 and Asp194. Ser166 serves as the catalytic Nucleophile. Glu270 is an active-site residue. Substrate contacts are provided by residues 272-275 (FVRS), Lys279, and 302-304 (HSW). His302 is a catalytic residue.

It belongs to the mycobacterial A85 antigen family.

It localises to the secreted. It carries out the reaction 2 alpha,alpha'-trehalose 6-mycolate = alpha,alpha'-trehalose 6,6'-bismycolate + alpha,alpha-trehalose. The catalysed reaction is an acyl-CoA + a 1,2-diacyl-sn-glycerol = a triacyl-sn-glycerol + CoA. The antigen 85 proteins (FbpA, FbpB, FbpC) are responsible for the high affinity of mycobacteria for fibronectin, a large adhesive glycoprotein, which facilitates the attachment of M.tuberculosis to murine alveolar macrophages (AMs). They also help to maintain the integrity of the cell wall by catalyzing the transfer of mycolic acids to cell wall arabinogalactan and through the synthesis of alpha,alpha-trehalose dimycolate (TDM, cord factor). They catalyze the transfer of a mycoloyl residue from one molecule of alpha,alpha-trehalose monomycolate (TMM) to another TMM, leading to the formation of TDM. This is Diacylglycerol acyltransferase/mycolyltransferase Ag85B (fbpB) from Mycobacterium intracellulare (strain ATCC 13950 / DSM 43223 / JCM 6384 / NCTC 13025 / 3600).